The sequence spans 347 residues: Quinolinate synthase (347 aa).

Residues histidine 47 and serine 68 each coordinate iminosuccinate. Cysteine 113 contacts [4Fe-4S] cluster. Iminosuccinate-binding positions include 139 to 141 (YAN) and serine 156. Cysteine 200 contributes to the [4Fe-4S] cluster binding site. Iminosuccinate is bound by residues 226 to 228 (HPE) and threonine 243. Cysteine 297 is a binding site for [4Fe-4S] cluster.

This sequence belongs to the quinolinate synthase family. Type 1 subfamily. [4Fe-4S] cluster is required as a cofactor.

The protein resides in the cytoplasm. The catalysed reaction is iminosuccinate + dihydroxyacetone phosphate = quinolinate + phosphate + 2 H2O + H(+). It participates in cofactor biosynthesis; NAD(+) biosynthesis; quinolinate from iminoaspartate: step 1/1. Functionally, catalyzes the condensation of iminoaspartate with dihydroxyacetone phosphate to form quinolinate. This is Quinolinate synthase from Salmonella gallinarum (strain 287/91 / NCTC 13346).